Here is a 130-residue protein sequence, read N- to C-terminus: Ribosome-binding factor A (130 aa).

A disordered region spans residues arginine 111–arginine 130.

It belongs to the RbfA family. In terms of assembly, monomer. Binds 30S ribosomal subunits, but not 50S ribosomal subunits or 70S ribosomes.

The protein localises to the cytoplasm. Functionally, one of several proteins that assist in the late maturation steps of the functional core of the 30S ribosomal subunit. Associates with free 30S ribosomal subunits (but not with 30S subunits that are part of 70S ribosomes or polysomes). Required for efficient processing of 16S rRNA. May interact with the 5'-terminal helix region of 16S rRNA. This is Ribosome-binding factor A from Xanthomonas euvesicatoria pv. vesicatoria (strain 85-10) (Xanthomonas campestris pv. vesicatoria).